A 299-amino-acid chain; its full sequence is NAD(+) hydrolase PdTIR (299 aa).

A TIR domain is found at 164–297 (PPHDIFISHA…EIVADLMAII (134 aa)). NAD(+) contacts are provided by residues 173–174 (AW) and R203. E239 is an active-site residue.

Homodimer. Interacts with host MYD88.

The enzyme catalyses NAD(+) + H2O = ADP-D-ribose + nicotinamide + H(+). Functionally, NAD(+) hydrolase (NADase) that catalyzes cleavage of NAD(+) into ADP-D-ribose (ADPR) and nicotinamide. The chain is NAD(+) hydrolase PdTIR from Paracoccus denitrificans (strain Pd 1222).